Reading from the N-terminus, the 156-residue chain is Photosystem I reaction center subunit XI (156 aa).

2 helical membrane passes run 75–95 (GGLL…SLYA) and 128–148 (FFIG…ALYF).

Belongs to the PsaL family.

The protein localises to the cellular thylakoid membrane. The sequence is that of Photosystem I reaction center subunit XI from Crocosphaera subtropica (strain ATCC 51142 / BH68) (Cyanothece sp. (strain ATCC 51142)).